The chain runs to 168 residues: Crossover junction endodeoxyribonuclease RuvC (168 aa).

Residues Asp-9, Glu-70, and Asp-145 contribute to the active site. Positions 9, 70, and 145 each coordinate Mg(2+).

Belongs to the RuvC family. Homodimer which binds Holliday junction (HJ) DNA. The HJ becomes 2-fold symmetrical on binding to RuvC with unstacked arms; it has a different conformation from HJ DNA in complex with RuvA. In the full resolvosome a probable DNA-RuvA(4)-RuvB(12)-RuvC(2) complex forms which resolves the HJ. Mg(2+) serves as cofactor.

The protein localises to the cytoplasm. The catalysed reaction is Endonucleolytic cleavage at a junction such as a reciprocal single-stranded crossover between two homologous DNA duplexes (Holliday junction).. Its function is as follows. The RuvA-RuvB-RuvC complex processes Holliday junction (HJ) DNA during genetic recombination and DNA repair. Endonuclease that resolves HJ intermediates. Cleaves cruciform DNA by making single-stranded nicks across the HJ at symmetrical positions within the homologous arms, yielding a 5'-phosphate and a 3'-hydroxyl group; requires a central core of homology in the junction. The consensus cleavage sequence is 5'-(A/T)TT(C/G)-3'. Cleavage occurs on the 3'-side of the TT dinucleotide at the point of strand exchange. HJ branch migration catalyzed by RuvA-RuvB allows RuvC to scan DNA until it finds its consensus sequence, where it cleaves and resolves the cruciform DNA. This chain is Crossover junction endodeoxyribonuclease RuvC, found in Chlamydia felis (strain Fe/C-56) (Chlamydophila felis).